A 1779-amino-acid chain; its full sequence is MAPEARASPRLLLRAALLLLAALLPVASSAGPPVDHPLKPRHVKLLSANMGLKVTWDPPKDATSRPVEHYNIAYGKSLKSLKSIKVNAETHSFLIKDVEKEVPNKPLRMRVRASDDRLSVAWKAPRLSGAKSPRRSRGFLLGYGESGRKMNYVPLTRDERSHEIKKLASESVYVVSLQSTNSQGQSQPVYRAALTKRKNAEEDELDVPEDISVRVMSSQSVLVAWVDPLVEKQKRVVASRQYTVRYREKGESARWDYKQVSNRRALVDSLIPDTVYEFAVRISQGERDGKWSASVFQRTPESAPTTAPENLRVWPVNGKPTVVTVSWDALPESEGKVKEYILSYAPALKPFGAKSLTFSGHTTSALVDGLQPGERYLFKIRATNRRGQGPHSKAFIVAIPTTSSTEASVQPNGRDNGKPEKPQQPSSSAPKVAASSQHMPPAKNVKDALSDLKNKIQTNGVAPGRTQLHSKVGELDPQSTEVTGEEELDSLENPRSSRLETLNQKQPLRVPSRSGHGALAPGRTPARAGLPVLSRKEGMDRRGPSLDPHPHPRVEPSASSAYHQLSSTDNDSVDRKEDDQAGSPDPKAASSGSSPKNPGRSRPTSAPSRHAASNMLRDKSRVHPGTKAASSSTSRQSHSSTSEEDSSAQPSRHFPLHRGSSTSPLSRGWKDRQDTHASSSHTTSRTASSSHPSALTEGSEEEDGGADSDRAAEDTIRRAEATAQIQQTRPGLGHFSLIRNKPFTPHSRNPNRFPRLRGPRLQPSVSPQSTSASKVLTRSPSLPASHTRPGSDVYGDGEDEEPLPATVINDRTPSYPRHPISGSSDTLRRGPQRGASLYRKEPIPENSKAAGADVPPGGRSPLSSKAQGFQQSTTDEGAPQTSPASTSRQPSPARPPASRSQPSPGSTVPRRMTPDRSSELSSSQSKDRSLSQPKLSVAHAGHDHPHTANSRGVLPSAPQNQNEGAQSTYEDNSTEIEGPDSRTPTHSARAKDTTPPILKPRQVGSQSWSSDNRPQPSQAGASERPIRPGSTHPRAQVPGRAGVQATSVKKVSPSKRPLPLESQQSVFAEEEEENEGMLKGKEDSLSTSVKKWPSSSSPRDKYADRNLDKDKAAIGLLVQEENTVPGRRPPGSPAIASHPSTRHQPRNPATASPIANTHSWPRYTTRAPSSYSSTTPMLSLRQRMQRRFRTPVSRQPPPPRPVLTPGYNGRPNAEENIPPGSIGKPNGQRIINGPQGTKWVVDLDRGLVLNAEGRYLQDSHGNPLRVRLGGDGRTIVDLGGTPMVSPDGLPLFGQGRHGKPVASAQDKPILSLGGKPLVGLEVVRTTTQVPTTTMPPSTTTTTVPPTTTLPPTTTTTRRTTTTRRTTTTRRPTTTTRATRRTTTTTTTPEPTTPSPTCPPGTLEHRDEAGNLIMGSNGIPECYPEEDDFSGLEIDTALPTEEDYVVYDDDYGLETTRPPTSTMPSTTAATPKVVPEQGTVSSFPEEEFDLAGKRRFVAPYVTYLSKDPAAPCSLTDALDHFQVESLDELIPNDLTKNDLPPQHAPRNITVVAMEGCHSFVIVDWNKAIPGDVVTGYLVYSASYEDFIRNKWSTQTSSVTHLPIENLKPNTRYYFKVQAKNPHGYGPVSPSVSFVTESDNPLLVVRPPGGEPIWIPFAFKHDPGYTDCHGRQYVKRTWYKKFVGVVLCNSLRYKIYLSDNLKDTFYSIGDSWGRGEDHCQFVDSHLDGRTGPQSYVEALPTIQGYYRQYRQEPVSFGHIGFGTPYYYVGWYECGVSIPGKW.

Residues 1-29 form the signal peptide; sequence MAPEARASPRLLLRAALLLLAALLPVASS. 4 Fibronectin type-III domains span residues 33–126, 103–203, 207–302, and 307–402; these read PVDH…KAPR, PNKP…AEED, VPED…TPES, and APEN…IPTT. The segment covering 400-413 has biased composition (polar residues); that stretch reads PTTSSTEASVQPNG. 4 disordered regions span residues 400–442, 459–1108, 1120–1227, and 1330–1401; these read PTTS…MPPA, NGVA…RNLD, EENT…KPNG, and PTTT…PPGT. The segment covering 423–437 has biased composition (low complexity); it reads QQPSSSAPKVAASSQ. The span at 493-506 shows a compositional bias: polar residues; it reads NPRSSRLETLNQKQ. A compositionally biased stretch (basic and acidic residues) spans 534–554; the sequence is SRKEGMDRRGPSLDPHPHPRV. Polar residues-rich tracts occupy residues 557-570 and 590-607; these read SASS…STDN and SSGS…TSAP. Low complexity predominate over residues 629-640; it reads ASSSTSRQSHSS. Residue S651 is modified to Phosphoserine. Residues 676-694 show a composition bias toward low complexity; that stretch reads HASSSHTTSRTASSSHPSA. The residue at position 699 (S699) is a Phosphoserine. The span at 707–720 shows a compositional bias: basic and acidic residues; the sequence is DSDRAAEDTIRRAE. 2 stretches are compositionally biased toward polar residues: residues 763-784 and 861-875; these read PSVS…SLPA and PLSS…STTD. Residues 879-904 show a composition bias toward low complexity; that stretch reads PQTSPASTSRQPSPARPPASRSQPSP. 2 stretches are compositionally biased toward polar residues: residues 957–971 and 1003–1020; these read APQN…TYED and VGSQ…SQAG. Residues 1085–1097 are compositionally biased toward low complexity; the sequence is LSTSVKKWPSSSS. Residues 1098 to 1108 show a composition bias toward basic and acidic residues; sequence PRDKYADRNLD. Polar residues-rich tracts occupy residues 1147–1159 and 1166–1177; these read NPAT…NTHS and RAPSSYSSTTPM. Residues 1330–1389 show a composition bias toward low complexity; the sequence is PTTTMPPSTTTTTVPPTTTLPPTTTTTRRTTTTRRTTTTRRPTTTTRATRRTTTTTTTPE. The region spanning 1543–1637 is the Fibronectin type-III 5 domain; that stretch reads APRNITVVAM…PSVSFVTESD (95 aa). N1546 carries N-linked (GlcNAc...) asparagine glycosylation.

Its subcellular location is the secreted. In terms of biological role, may be an activator of G protein signaling. This is Fibronectin type III domain-containing protein 1 (Fndc1) from Rattus norvegicus (Rat).